The sequence spans 464 residues: 2-oxoadipate dioxygenase/decarboxylase (464 aa).

Residues histidine 70, arginine 74, and histidine 226 each coordinate 2-oxoadipate. Histidine 70 serves as a coordination point for Fe(2+). Fe(2+)-binding residues include histidine 226 and glutamate 294. Valine 402 is a 2-oxoadipate binding site.

Belongs to the 2-oxoadipate dioxygenase/decarboxylase family. Requires Fe(2+) as cofactor.

The enzyme catalyses 2-oxoadipate + O2 = (R)-2-hydroxyglutarate + CO2. The protein operates within amino-acid degradation. Inhibited by EDTA. In terms of biological role, catalyzes the decarboxylation and hydroxylation of 2-oxoadipate (2OA) to form D-2-hydroxyglutarate (D-2-HGA). Is specific for 2-oxoadipate. Is involved in a D-lysine catabolic pathway. The sequence is that of 2-oxoadipate dioxygenase/decarboxylase from Pseudomonas putida (strain ATCC 47054 / DSM 6125 / CFBP 8728 / NCIMB 11950 / KT2440).